Here is a 178-residue protein sequence, read N- to C-terminus: Large ribosomal subunit protein uL6 (178 aa).

Belongs to the universal ribosomal protein uL6 family. Part of the 50S ribosomal subunit.

Functionally, this protein binds to the 23S rRNA, and is important in its secondary structure. It is located near the subunit interface in the base of the L7/L12 stalk, and near the tRNA binding site of the peptidyltransferase center. The sequence is that of Large ribosomal subunit protein uL6 from Leuconostoc mesenteroides subsp. mesenteroides (strain ATCC 8293 / DSM 20343 / BCRC 11652 / CCM 1803 / JCM 6124 / NCDO 523 / NBRC 100496 / NCIMB 8023 / NCTC 12954 / NRRL B-1118 / 37Y).